The following is a 333-amino-acid chain: Ferrochelatase (333 aa).

Residues His202 and Glu284 each contribute to the Fe cation site.

This sequence belongs to the ferrochelatase family.

The protein localises to the cytoplasm. The catalysed reaction is heme b + 2 H(+) = protoporphyrin IX + Fe(2+). Its pathway is porphyrin-containing compound metabolism; protoheme biosynthesis; protoheme from protoporphyrin-IX: step 1/1. Its function is as follows. Catalyzes the ferrous insertion into protoporphyrin IX. The protein is Ferrochelatase of Francisella tularensis subsp. novicida (strain U112).